The chain runs to 251 residues: Zinc import ATP-binding protein ZnuC (251 aa).

The ABC transporter domain maps to 5–220 (VSLENVSVSF…PEFISMFGPR (216 aa)). 37 to 44 (GPNGAGKS) contributes to the ATP binding site.

Belongs to the ABC transporter superfamily. Zinc importer (TC 3.A.1.15.5) family. As to quaternary structure, the complex is composed of two ATP-binding proteins (ZnuC), two transmembrane proteins (ZnuB) and a solute-binding protein (ZnuA).

The protein localises to the cell inner membrane. It catalyses the reaction Zn(2+)(out) + ATP(in) + H2O(in) = Zn(2+)(in) + ADP(in) + phosphate(in) + H(+)(in). Part of the ABC transporter complex ZnuABC involved in zinc import. Responsible for energy coupling to the transport system. Seems to be important for the virulence. This is Zinc import ATP-binding protein ZnuC from Salmonella typhimurium (strain LT2 / SGSC1412 / ATCC 700720).